The sequence spans 442 residues: Probable carboxypeptidase PABG_01461 (442 aa).

The first 20 residues, M1–A20, serve as a signal peptide directing secretion. N-linked (GlcNAc...) asparagine glycosylation occurs at N102. A Zn(2+)-binding site is contributed by D160. The Proton acceptor role is filled by E192. E193 provides a ligand contact to Zn(2+). N-linked (GlcNAc...) asparagine glycosylation is present at N343.

The protein belongs to the peptidase M20A family. The cofactor is Zn(2+).

It localises to the secreted. In Paracoccidioides brasiliensis (strain Pb03), this protein is Probable carboxypeptidase PABG_01461.